The following is a 187-amino-acid chain: Troponin I, slow skeletal muscle (187 aa).

Residue Pro2 is modified to N-acetylproline. Residues 2 to 48 (PEVERKSKITASRKLMLKSLMLAKAKECWEQEHEEREAEKVRYLSER) form an involved in binding TNC region. A Phosphoserine modification is found at Ser58. Residues 97–118 (LKLKVLDLRGKFKRPPLRRVRV) form an involved in binding TNC and actin region.

It belongs to the troponin I family. As to quaternary structure, binds to actin and tropomyosin.

In terms of biological role, troponin I is the inhibitory subunit of troponin, the thin filament regulatory complex which confers calcium-sensitivity to striated muscle actomyosin ATPase activity. The chain is Troponin I, slow skeletal muscle (Tnni1) from Rattus norvegicus (Rat).